A 545-amino-acid chain; its full sequence is Sulfite oxidase, mitochondrial (545 aa).

Residues 1–79 (MLLLHRAVVL…YQDHRCRAAQ (79 aa)) constitute a mitochondrion transit peptide. The Cytochrome b5 heme-binding domain occupies 82–161 (TRIYTKEEVS…LAQYKVGELN (80 aa)). Heme b is bound at residue H118. S123 carries the phosphoserine modification. Heme b-binding residues include H143, Q145, and H147. Residues 165-174 (KVAPTVETSD) are hinge. Positions 175–401 (PYADDPVRHP…YSHWQRRDYK (227 aa)) are moco domain. Residues 215–219 (FTRNH), C264, D322, H361, R366, and 377–379 (HVK) contribute to the Mo-molybdopterin site. Residues 402-538 (GFSPSVDWDT…RGVLSNAWHR (137 aa)) are homodimerization.

In terms of assembly, homodimer. Requires heme b as cofactor. The cofactor is Mo-molybdopterin.

Its subcellular location is the mitochondrion intermembrane space. It carries out the reaction sulfite + O2 + H2O = sulfate + H2O2. It functions in the pathway energy metabolism; sulfur metabolism. Functionally, catalyzes the oxidation of sulfite to sulfate, the terminal reaction in the oxidative degradation of sulfur-containing amino acids. The protein is Sulfite oxidase, mitochondrial (SUOX) of Macaca fascicularis (Crab-eating macaque).